Consider the following 415-residue polypeptide: Homoserine O-succinyltransferase (415 aa).

Polar residues predominate over residues 1–26 (MTSPALTAASVTPSRNTTSPDTTSHR). The segment at 1–27 (MTSPALTAASVTPSRNTTSPDTTSHRP) is disordered. The region spanning 71–386 (NAVLICHALN…HGHDAFLLED (316 aa)) is the AB hydrolase-1 domain. The active-site Nucleophile is Ser-177. Position 247 (Arg-247) interacts with substrate. Residues Asp-346 and His-379 contribute to the active site. Asp-380 provides a ligand contact to substrate.

The protein belongs to the AB hydrolase superfamily. MetX family. As to quaternary structure, homodimer.

Its subcellular location is the cytoplasm. The catalysed reaction is L-homoserine + succinyl-CoA = O-succinyl-L-homoserine + CoA. It functions in the pathway amino-acid biosynthesis; L-methionine biosynthesis via de novo pathway; O-succinyl-L-homoserine from L-homoserine: step 1/1. In terms of biological role, transfers a succinyl group from succinyl-CoA to L-homoserine, forming succinyl-L-homoserine. The polypeptide is Homoserine O-succinyltransferase (Bordetella avium (strain 197N)).